The primary structure comprises 265 residues: Putative 2-aminoethylphosphonate transport system permease protein PhnV (265 aa).

A run of 6 helical transmembrane segments spans residues 13–33 (GVVA…VILM), 69–89 (LTIG…AALA), 104–124 (VFYL…LVAF), 131–151 (MNGT…AFTF), 185–205 (LPLL…LSMG), and 233–253 (NIAD…LLMM). In terms of domain architecture, ABC transmembrane type-1 spans 65–253 (LLASLTIGFC…LVAITLLLMM (189 aa)).

It belongs to the binding-protein-dependent transport system permease family.

It is found in the cell inner membrane. In terms of biological role, probably part of the PhnSTUV complex (TC 3.A.1.11.5) involved in 2-aminoethylphosphonate import. Probably responsible for the translocation of the substrate across the membrane. The protein is Putative 2-aminoethylphosphonate transport system permease protein PhnV (phnV) of Salmonella paratyphi A (strain ATCC 9150 / SARB42).